Consider the following 503-residue polypeptide: TGF-beta receptor type-1 (503 aa).

The signal sequence occupies residues 1 to 29 (MEVAAGAPRSRLLLFVLAATATLAPEATA). Residues 30–126 (FQCFCHLCTK…PPSGLGPVEL (97 aa)) lie on the Extracellular side of the membrane. 5 disulfide bridges follow: Cys32–Cys50, Cys34–Cys37, Cys44–Cys67, Cys82–Cys96, and Cys97–Cys102. N-linked (GlcNAc...) asparagine glycosylation is present at Asn41. The helical transmembrane segment at 127-147 (AAVIAGPVCFVCISLMLMVYI) threads the bilayer. Topologically, residues 148-503 (CHNRTVIHHR…QLSQQEGIKM (356 aa)) are cytoplasmic. A Phosphoserine modification is found at Ser165. In terms of domain architecture, GS spans 175–204 (TTLKDLIYDMTTSGSGSGLPLLVQRTIART). Phosphothreonine; by TGFBR2 is present on residues Thr185 and Thr186. Phosphoserine; by TGFBR2 is present on residues Ser187, Ser189, and Ser191. Positions 193 to 194 (LP) match the FKBP1A-binding motif. The region spanning 205–495 (IVLQESIGKG…LRIKKTLSQL (291 aa)) is the Protein kinase domain. ATP-binding positions include 211–219 (IGKGRFGEV) and Lys232. Catalysis depends on Asp333, which acts as the Proton acceptor. A Glycyl lysine isopeptide (Lys-Gly) (interchain with G-Cter in SUMO) cross-link involves residue Lys391.

The protein belongs to the protein kinase superfamily. TKL Ser/Thr protein kinase family. TGFB receptor subfamily. As to quaternary structure, homodimer; in the endoplasmic reticulum but also at the cell membrane. Heterohexamer; TGFB1, TGFB2 and TGFB3 homodimeric ligands assemble a functional receptor composed of two TGFBR1 and TGFBR2 heterodimers to form a ligand-receptor heterohexamer. The respective affinity of TGBRB1 and TGFBR2 for the ligands may modulate the kinetics of assembly of the receptor and may explain the different biological activities of TGFB1, TGFB2 and TGFB3. Component of a complex composed of TSC22D1 (via N-terminus), TGFBR1 and TGFBR2; the interaction between TSC22D1 and TGFBR1 is inhibited by SMAD7 and promoted by TGFB1. Interacts with CD109; inhibits TGF-beta receptor activation in keratinocytes. Interacts with RBPMS. Interacts (unphosphorylated) with FKBP1A; prevents TGFBR1 phosphorylation by TGFBR2 and stabilizes it in the inactive conformation. Interacts with SMAD2, SMAD3 and ZFYVE9; ZFYVE9 recruits SMAD2 and SMAD3 to the TGF-beta receptor. Interacts with TRAF6 and MAP3K7; induces MAP3K7 activation by TRAF6. Interacts with PARD6A; involved in TGF-beta induced epithelial to mesenchymal transition. Interacts with NEDD4L. Interacts with SMAD7, SMURF1 and SMURF2; SMAD7 recruits NEDD4L, SMURF1 and SMURF2 to the TGF-beta receptor. Interacts with USP15 and VPS39. Interacts with SDCBP (via C-terminus). Interacts with CAV1 and this interaction is impaired in the presence of SDCBP. Interacts with APPL1; interaction is TGF beta dependent; mediates trafficking of the TGFBR1 from the endosomes to the nucleus via microtubules in a TRAF6-dependent manner. Interacts with GPR50; this interaction promotes the constitutive activation of SMAD signaling pathway. Mg(2+) is required as a cofactor. Mn(2+) serves as cofactor. Post-translationally, phosphorylated at basal levels in the absence of ligand. Activated upon phosphorylation by TGFBR2, mainly in the GS domain. Phosphorylation in the GS domain abrogates FKBP1A-binding. N-Glycosylated. In terms of processing, ubiquitinated; undergoes ubiquitination catalyzed by several E3 ubiquitin ligases including SMURF1, SMURF2 and NEDD4L2. Results in the proteasomal and/or lysosomal degradation of the receptor thereby negatively regulating its activity. Deubiquitinated by USP15, leading to stabilization of the protein and enhanced TGF-beta signal. Its ubiquitination and proteasome-mediated degradation is negatively regulated by SDCBP.

Its subcellular location is the cell membrane. The protein localises to the cell junction. The protein resides in the tight junction. It is found in the membrane raft. It localises to the cell surface. The enzyme catalyses L-threonyl-[receptor-protein] + ATP = O-phospho-L-threonyl-[receptor-protein] + ADP + H(+). It carries out the reaction L-seryl-[receptor-protein] + ATP = O-phospho-L-seryl-[receptor-protein] + ADP + H(+). Kept in an inactive conformation by FKBP1A preventing receptor activation in absence of ligand. CD109 is another inhibitor of the receptor. Functionally, transmembrane serine/threonine kinase forming with the TGF-beta type II serine/threonine kinase receptor, TGFBR2, the non-promiscuous receptor for the TGF-beta cytokines TGFB1, TGFB2 and TGFB3. Transduces the TGFB1, TGFB2 and TGFB3 signal from the cell surface to the cytoplasm and is thus regulating a plethora of physiological and pathological processes including cell cycle arrest in epithelial and hematopoietic cells, control of mesenchymal cell proliferation and differentiation, wound healing, extracellular matrix production, immunosuppression and carcinogenesis. The formation of the receptor complex composed of 2 TGFBR1 and 2 TGFBR2 molecules symmetrically bound to the cytokine dimer results in the phosphorylation and the activation of TGFBR1 by the constitutively active TGFBR2. Activated TGFBR1 phosphorylates SMAD2 which dissociates from the receptor and interacts with SMAD4. The SMAD2-SMAD4 complex is subsequently translocated to the nucleus where it modulates the transcription of the TGF-beta-regulated genes. This constitutes the canonical SMAD-dependent TGF-beta signaling cascade. Also involved in non-canonical, SMAD-independent TGF-beta signaling pathways. For instance, TGFBR1 induces TRAF6 autoubiquitination which in turn results in MAP3K7 ubiquitination and activation to trigger apoptosis. Also regulates epithelial to mesenchymal transition through a SMAD-independent signaling pathway through PARD6A phosphorylation and activation. The sequence is that of TGF-beta receptor type-1 (TGFBR1) from Sus scrofa (Pig).